Here is a 619-residue protein sequence, read N- to C-terminus: DNA mismatch repair protein MutL (619 aa).

This sequence belongs to the DNA mismatch repair MutL/HexB family.

This protein is involved in the repair of mismatches in DNA. It is required for dam-dependent methyl-directed DNA mismatch repair. May act as a 'molecular matchmaker', a protein that promotes the formation of a stable complex between two or more DNA-binding proteins in an ATP-dependent manner without itself being part of a final effector complex. The protein is DNA mismatch repair protein MutL of Myxococcus xanthus (strain DK1622).